Reading from the N-terminus, the 107-residue chain is Large ribosomal subunit protein uL24 (107 aa).

The protein belongs to the universal ribosomal protein uL24 family. In terms of assembly, part of the 50S ribosomal subunit.

In terms of biological role, one of two assembly initiator proteins, it binds directly to the 5'-end of the 23S rRNA, where it nucleates assembly of the 50S subunit. Functionally, one of the proteins that surrounds the polypeptide exit tunnel on the outside of the subunit. This is Large ribosomal subunit protein uL24 from Nitrosomonas eutropha (strain DSM 101675 / C91 / Nm57).